Here is a 92-residue protein sequence, read N- to C-terminus: UPF0358 protein SH1840 (92 aa).

Belongs to the UPF0358 family.

This Staphylococcus haemolyticus (strain JCSC1435) protein is UPF0358 protein SH1840.